Reading from the N-terminus, the 410-residue chain is Protein CNPPD1 (410 aa).

Residues 233-253 (CLLAVAYVSSVALAVASVAVI) form a helical membrane-spanning segment.

Belongs to the CNPPD1 family.

Its subcellular location is the membrane. The protein is Protein CNPPD1 (CNPPD1) of Homo sapiens (Human).